Here is a 1186-residue protein sequence, read N- to C-terminus: Chromosome partition protein Smc (1186 aa).

Pro32–Asn39 is a binding site for ATP. 2 coiled-coil regions span residues Val167–Lys206 and Ser259–Gln481. One can recognise an SMC hinge domain in the interval Gly519–Ala637. 3 coiled-coil regions span residues Leu672–Ser864, Arg893–Gln943, and Ser990–Met1029.

This sequence belongs to the SMC family. In terms of assembly, homodimer.

Its subcellular location is the cytoplasm. Functionally, required for chromosome condensation and partitioning. This Bacillus subtilis (strain 168) protein is Chromosome partition protein Smc.